We begin with the raw amino-acid sequence, 713 residues long: Methionine--tRNA ligase (713 aa).

A 'HIGH' region motif is present at residues 31–41 (PYANGSIHLGH). Zn(2+) is bound by residues Cys-162, Cys-165, Cys-175, and Cys-178. The 'KMSKS' region signature appears at 348 to 352 (KMSKS). Lys-351 lines the ATP pocket. The region spanning 609–713 (DFAKIDLRIV…DGAKAGMRVK (105 aa)) is the tRNA-binding domain.

Belongs to the class-I aminoacyl-tRNA synthetase family. MetG type 1 subfamily. Homodimer. Zn(2+) serves as cofactor.

It is found in the cytoplasm. It catalyses the reaction tRNA(Met) + L-methionine + ATP = L-methionyl-tRNA(Met) + AMP + diphosphate. Functionally, is required not only for elongation of protein synthesis but also for the initiation of all mRNA translation through initiator tRNA(fMet) aminoacylation. The polypeptide is Methionine--tRNA ligase (Colwellia psychrerythraea (strain 34H / ATCC BAA-681) (Vibrio psychroerythus)).